Reading from the N-terminus, the 101-residue chain is NADH-quinone oxidoreductase subunit K (101 aa).

3 consecutive transmembrane segments (helical) span residues 4 to 24 (LSHY…GIFL), 30 to 50 (IVLL…FIAF), and 61 to 81 (VFVF…LAIL).

Belongs to the complex I subunit 4L family. NDH-1 is composed of 14 different subunits. Subunits NuoA, H, J, K, L, M, N constitute the membrane sector of the complex.

It localises to the cell inner membrane. The catalysed reaction is a quinone + NADH + 5 H(+)(in) = a quinol + NAD(+) + 4 H(+)(out). NDH-1 shuttles electrons from NADH, via FMN and iron-sulfur (Fe-S) centers, to quinones in the respiratory chain. The immediate electron acceptor for the enzyme in this species is believed to be ubiquinone. Couples the redox reaction to proton translocation (for every two electrons transferred, four hydrogen ions are translocated across the cytoplasmic membrane), and thus conserves the redox energy in a proton gradient. This is NADH-quinone oxidoreductase subunit K from Methylovorus glucosotrophus (strain SIP3-4).